Consider the following 344-residue polypeptide: Anthranilate phosphoribosyltransferase (344 aa).

Residues Gly84, 87-88, Thr92, 94-97, 112-120, and Ser124 contribute to the 5-phospho-alpha-D-ribose 1-diphosphate site; these read GD, NIST, and KHGNRSVSS. Gly84 provides a ligand contact to anthranilate. Residue Ser96 participates in Mg(2+) binding. Residue Asn115 participates in anthranilate binding. Residue Arg170 coordinates anthranilate. Mg(2+) contacts are provided by Asp229 and Glu230.

Belongs to the anthranilate phosphoribosyltransferase family. In terms of assembly, homodimer. Mg(2+) serves as cofactor.

It carries out the reaction N-(5-phospho-beta-D-ribosyl)anthranilate + diphosphate = 5-phospho-alpha-D-ribose 1-diphosphate + anthranilate. The protein operates within amino-acid biosynthesis; L-tryptophan biosynthesis; L-tryptophan from chorismate: step 2/5. Functionally, catalyzes the transfer of the phosphoribosyl group of 5-phosphorylribose-1-pyrophosphate (PRPP) to anthranilate to yield N-(5'-phosphoribosyl)-anthranilate (PRA). In Xylella fastidiosa (strain M23), this protein is Anthranilate phosphoribosyltransferase.